The chain runs to 245 residues: 1-(5-phosphoribosyl)-5-[(5-phosphoribosylamino)methylideneamino] imidazole-4-carboxamide isomerase (245 aa).

The active-site Proton acceptor is the Asp7. The active-site Proton donor is the Asp129.

The protein belongs to the HisA/HisF family.

Its subcellular location is the cytoplasm. The enzyme catalyses 1-(5-phospho-beta-D-ribosyl)-5-[(5-phospho-beta-D-ribosylamino)methylideneamino]imidazole-4-carboxamide = 5-[(5-phospho-1-deoxy-D-ribulos-1-ylimino)methylamino]-1-(5-phospho-beta-D-ribosyl)imidazole-4-carboxamide. Its pathway is amino-acid biosynthesis; L-histidine biosynthesis; L-histidine from 5-phospho-alpha-D-ribose 1-diphosphate: step 4/9. The sequence is that of 1-(5-phosphoribosyl)-5-[(5-phosphoribosylamino)methylideneamino] imidazole-4-carboxamide isomerase from Tolumonas auensis (strain DSM 9187 / NBRC 110442 / TA 4).